We begin with the raw amino-acid sequence, 455 residues long: tRNA modification GTPase MnmE (455 aa).

Residues R24, E86, and R125 each contribute to the (6S)-5-formyl-5,6,7,8-tetrahydrofolate site. In terms of domain architecture, TrmE-type G spans 220–376 (GLTVAIIGRP…LETAILETVQ (157 aa)). N230 contributes to the K(+) binding site. Residues 230–235 (NVGKSS), 249–255 (TDLPGTT), and 274–277 (DTAG) contribute to the GTP site. Position 234 (S234) interacts with Mg(2+). Residues T249, L251, and T254 each coordinate K(+). T255 contributes to the Mg(2+) binding site. Residue K455 coordinates (6S)-5-formyl-5,6,7,8-tetrahydrofolate.

Belongs to the TRAFAC class TrmE-Era-EngA-EngB-Septin-like GTPase superfamily. TrmE GTPase family. In terms of assembly, homodimer. Heterotetramer of two MnmE and two MnmG subunits. Requires K(+) as cofactor.

It is found in the cytoplasm. Its function is as follows. Exhibits a very high intrinsic GTPase hydrolysis rate. Involved in the addition of a carboxymethylaminomethyl (cmnm) group at the wobble position (U34) of certain tRNAs, forming tRNA-cmnm(5)s(2)U34. The chain is tRNA modification GTPase MnmE from Acaryochloris marina (strain MBIC 11017).